We begin with the raw amino-acid sequence, 215 residues long: Imidazole glycerol phosphate synthase subunit HisH (215 aa).

The Glutamine amidotransferase type-1 domain occupies 8-215; that stretch reads KVVVFDYGFG…QLLNNWIGTL (208 aa). Cysteine 86 (nucleophile) is an active-site residue. Residues histidine 196 and glutamate 198 contribute to the active site.

Heterodimer of HisH and HisF.

Its subcellular location is the cytoplasm. It carries out the reaction 5-[(5-phospho-1-deoxy-D-ribulos-1-ylimino)methylamino]-1-(5-phospho-beta-D-ribosyl)imidazole-4-carboxamide + L-glutamine = D-erythro-1-(imidazol-4-yl)glycerol 3-phosphate + 5-amino-1-(5-phospho-beta-D-ribosyl)imidazole-4-carboxamide + L-glutamate + H(+). The catalysed reaction is L-glutamine + H2O = L-glutamate + NH4(+). It functions in the pathway amino-acid biosynthesis; L-histidine biosynthesis; L-histidine from 5-phospho-alpha-D-ribose 1-diphosphate: step 5/9. Its function is as follows. IGPS catalyzes the conversion of PRFAR and glutamine to IGP, AICAR and glutamate. The HisH subunit catalyzes the hydrolysis of glutamine to glutamate and ammonia as part of the synthesis of IGP and AICAR. The resulting ammonia molecule is channeled to the active site of HisF. In Streptomyces avermitilis (strain ATCC 31267 / DSM 46492 / JCM 5070 / NBRC 14893 / NCIMB 12804 / NRRL 8165 / MA-4680), this protein is Imidazole glycerol phosphate synthase subunit HisH.